A 305-amino-acid chain; its full sequence is MVDKLTHLKQLEAESIHIIREVAAEFDNPVMLYSIGKDSAVMLHLARKAFFPGKLPFPVMHVDTRWKFQEMYKFRDKMVEELGLDLITHINPDGVAQNINPFTHGSAKHTDIMKTEGLKQALDKHGFDAAFGGARRDEEKSRAKERVYSFRDSKHRWDPKNQRPELWNVYNGKVNKGESIRVFPLSNWTELDIWQYIYLEGIPIVPLYFAAEREVIEKNGTLIMIDDERILEHLSDEDKARIVKKKVRFRTLGCYPLTGAVESEAESLTDIIQEMLLTRTSERQGRVIDHDGAGSMEDKKRQGYF.

The protein belongs to the PAPS reductase family. CysD subfamily. Heterodimer composed of CysD, the smaller subunit, and CysN.

The enzyme catalyses sulfate + ATP + H(+) = adenosine 5'-phosphosulfate + diphosphate. Its pathway is sulfur metabolism; hydrogen sulfide biosynthesis; sulfite from sulfate: step 1/3. Its function is as follows. With CysN forms the ATP sulfurylase (ATPS) that catalyzes the adenylation of sulfate producing adenosine 5'-phosphosulfate (APS) and diphosphate, the first enzymatic step in sulfur assimilation pathway. APS synthesis involves the formation of a high-energy phosphoric-sulfuric acid anhydride bond driven by GTP hydrolysis by CysN coupled to ATP hydrolysis by CysD. The chain is Sulfate adenylyltransferase subunit 2 from Pseudomonas fluorescens (strain Pf0-1).